Here is a 744-residue protein sequence, read N- to C-terminus: Prestin (744 aa).

Over 1 to 75 the chain is Cytoplasmic; the sequence is MDHAEENEIP…PITKWLPAYK (75 aa). A helical transmembrane segment spans residues 76–104; sequence FKEYVLGDLVSGISTGVLQLPQGLAFAML. Over 105 to 108 the chain is Extracellular; sequence AAVP. A helical membrane pass occupies residues 109-126; the sequence is PVFGLYSSFYPVIMYCFF. At 127–137 the chain is on the cytoplasmic side; sequence GTSRHISIGPF. A helical transmembrane segment spans residues 138–149; that stretch reads AVISLMIGGVAV. Residues 150 to 168 lie on the Extracellular side of the membrane; that stretch reads RLVPDDIVIPGGVNATNGT. The Involved in motor function motif lies at 158–168; it reads IPGGVNATNGT. 2 N-linked (GlcNAc...) asparagine glycosylation sites follow: Asn-163 and Asn-166. A helical transmembrane segment spans residues 169 to 196; it reads EARDALRVKVAMSVTLLSGIIQFCLGVC. At 197 to 206 the chain is on the cytoplasmic side; the sequence is RFGFVAIYLT. A helical transmembrane segment spans residues 207–230; the sequence is EPLVRGFTTAAAVHVFTSMLKYLF. Topologically, residues 231 to 241 are extracellular; the sequence is GVKTKRYSGIF. Residues 242–253 constitute an intramembrane region (helical); that stretch reads SVVYSTVAVLQN. Residues 254–258 lie on the Extracellular side of the membrane; it reads VKNLN. Residues 259-276 form a helical membrane-spanning segment; the sequence is VCSLGVGLMVFGLLLGGK. At 277–291 the chain is on the cytoplasmic side; it reads EFNERFKEKLPAPIP. Residues 292–307 traverse the membrane as a helical segment; sequence LEFFAVVMGTGISAGF. Residues 308-332 are Extracellular-facing; sequence NLHESYSVDVVGTLPLGLLPPANPD. The helical transmembrane segment at 333-359 threads the bilayer; that stretch reads TSLFHLVYVDAIAIAIVGFSVTISMAK. Topologically, residues 360–370 are cytoplasmic; that stretch reads TLANKHGYQVD. A helical membrane pass occupies residues 371–388; the sequence is GNQELIALGICNSIGSLF. The Extracellular segment spans residues 389 to 396; the sequence is QTFSISCS. A helical transmembrane segment spans residues 397–406; it reads LSRSLVQEGT. Residue Ser-398 participates in salicylate binding. The Cytoplasmic portion of the chain corresponds to 407–410; sequence GGKT. Residues 411–431 traverse the membrane as a helical segment; sequence QLAGCLASLMILLVILATGFL. At 432–436 the chain is on the extracellular side; it reads FESLP. The helical transmembrane segment at 437–464 threads the bilayer; sequence QAVLSAIVIVNLKGMFMQFSDLPFFWRT. Position 465 (Ser-465) is a topological domain, cytoplasmic. A helical transmembrane segment spans residues 466-481; sequence KIELTIWLTTFVSSLF. Residues 482–484 lie on the Extracellular side of the membrane; sequence LGL. The chain crosses the membrane as a helical span at residues 485–504; that stretch reads DYGLITAVIIALLTVIYRTQ. The tract at residues 505 to 718 is extended region for STAS domain; sequence SPSYTVLGQL…AVLGSQVREA (214 aa). Residues 505 to 744 are Cytoplasmic-facing; the sequence is SPSYTVLGQL…PNATPTTPEA (240 aa). One can recognise an STAS domain in the interval 525 to 713; sequence AYEEVKEIPG…HSIHDAVLGS (189 aa). The segment at 720–744 is disordered; that stretch reads AEQETTVLPPQEDMEPNATPTTPEA.

Belongs to the SLC26A/SulP transporter (TC 2.A.53) family. Homodimer. Interacts (via STAS domain) with CALM; this interaction is calcium-dependent and the STAS domain interacts with only one lobe of CALM which is an elongated conformation. Interacts with MYH1. Specifically expressed in outer hair cells of cochleae (at protein level). Not detected in other cells of the organ of Corti.

It localises to the lateral cell membrane. The enzyme catalyses 2 hydrogencarbonate(in) + chloride(out) = 2 hydrogencarbonate(out) + chloride(in). With respect to regulation, salicylate, an inhibitor of outer hair cell motility, acts as a competitive antagonist at the prestin anion-binding site. Its function is as follows. Voltage-sensitive motor protein that drives outer hair cell (OHC) electromotility (eM) and participates in sound amplification in the hearing organ. Converts changes in the transmembrane electric potential into mechanical displacements resulting in the coupling of its expansion to movement of a charged voltage sensor across the lipid membrane. The nature of the voltage sensor is not completely clear, and two models compete. In the first model, acts as an incomplete transporter where intracellular chloride anion acts as extrinsic voltage sensor that drives conformational change in the protein which is sufficient to produce a length change in the plane of the membrane and hence in the length of the OHC. The second model in which multiple charged amino acid residues are distributed at the intracellular and extracellular membrane interfaces that form an intrinsic voltage sensor, whose movement produces the non-linear capacitance (NLC). However, the effective voltage sensor may be the result of a hybrid voltage sensor assembled from intrinsic charge (charged residues) and extrinsic charge (bound anion). Notably, binding of anions to the anion-binding pocket partially neutralizes the intrinsic positive charge rather than to form an electrically negative sensor, therefore remaining charge may serve as voltage sensor that, after depolarization, moves from down (expanded state) to up (contracted) conformation, which is accompanied by an eccentric contraction of the intermembrane cross-sectional area of the protein as well as a major increase in the hydrophobic thickness of the protein having as consequences the plasma membrane thickening and the cell contraction after membrane depolarization. The anion-binding pocket transits from the inward-open (Down) state, where it is exposed toward the intracellular solvent in the absence of anion, to the occluded (Up) state upon anion binding. Salicylate competes for the anion-binding site and inhibits the voltage-sensor movement, and therefore inhibits the charge transfer and electromotility by displacing Cl(-) from the anion-binding site and by preventing the structural transitions to the contracted state. In addition, can act as a weak Cl(-)/HCO3(-) antiporter across the cell membrane and so regulate the intracellular pH of the outer hair cells (OHCs), while firstly found as being unable to mediate electrogenic anion transport. Moreover, supports a role in cardiac mechanical amplification serving as an elastic element to enhance the actomyosin- based sarcomere contraction system. The sequence is that of Prestin from Rattus norvegicus (Rat).